The chain runs to 160 residues: SsrA-binding protein (160 aa).

The protein belongs to the SmpB family.

The protein resides in the cytoplasm. Its function is as follows. Required for rescue of stalled ribosomes mediated by trans-translation. Binds to transfer-messenger RNA (tmRNA), required for stable association of tmRNA with ribosomes. tmRNA and SmpB together mimic tRNA shape, replacing the anticodon stem-loop with SmpB. tmRNA is encoded by the ssrA gene; the 2 termini fold to resemble tRNA(Ala) and it encodes a 'tag peptide', a short internal open reading frame. During trans-translation Ala-aminoacylated tmRNA acts like a tRNA, entering the A-site of stalled ribosomes, displacing the stalled mRNA. The ribosome then switches to translate the ORF on the tmRNA; the nascent peptide is terminated with the 'tag peptide' encoded by the tmRNA and targeted for degradation. The ribosome is freed to recommence translation, which seems to be the essential function of trans-translation. In Histophilus somni (strain 129Pt) (Haemophilus somnus), this protein is SsrA-binding protein.